The sequence spans 270 residues: Phosphatidylglycerol--prolipoprotein diacylglyceryl transferase (270 aa).

7 consecutive transmembrane segments (helical) span residues 10 to 30 (VALA…LIGI), 56 to 76 (LIFW…VLFY), 92 to 112 (WKGG…AWWF), 120 to 140 (FFQL…AGRI), 174 to 194 (PSQL…LYIF), 202 to 222 (MAVS…VEFV), and 236 to 256 (WVTM…GLLW). Arg139 provides a ligand contact to a 1,2-diacyl-sn-glycero-3-phospho-(1'-sn-glycerol).

Belongs to the Lgt family.

It is found in the cell inner membrane. It carries out the reaction L-cysteinyl-[prolipoprotein] + a 1,2-diacyl-sn-glycero-3-phospho-(1'-sn-glycerol) = an S-1,2-diacyl-sn-glyceryl-L-cysteinyl-[prolipoprotein] + sn-glycerol 1-phosphate + H(+). It participates in protein modification; lipoprotein biosynthesis (diacylglyceryl transfer). In terms of biological role, catalyzes the transfer of the diacylglyceryl group from phosphatidylglycerol to the sulfhydryl group of the N-terminal cysteine of a prolipoprotein, the first step in the formation of mature lipoproteins. In Pseudomonas fluorescens (strain SBW25), this protein is Phosphatidylglycerol--prolipoprotein diacylglyceryl transferase.